Here is a 371-residue protein sequence, read N- to C-terminus: Cytochrome b (371 aa).

4 consecutive transmembrane segments (helical) span residues 25–45 (FGSMLLACSSMQVLTGFFLAV), 69–90 (WMMQNLHAIGASMFFICIYIHI), 105–125 (WLSGTTLLIMLMATAFFGYVL), and 170–190 (FFALHFILPFGIISLSSLHIM). Heme b-binding residues include His-75 and His-89. The heme b site is built by His-174 and His-188. Residue His-193 participates in a ubiquinone binding. The next 4 helical transmembrane spans lie at 218-238 (YKDLLMLSLMVLMLLMTVSFL), 280-300 (LWGALALAMSITILLTVPFTH), 312-332 (IMQLMFWTLVATFMVITWAAT), and 339-358 (FTMISQIASTIYFLFLIMNP).

Belongs to the cytochrome b family. The cytochrome bc1 complex contains 3 respiratory subunits (MT-CYB, CYC1 and UQCRFS1), 2 core proteins (UQCRC1 and UQCRC2) and probably 6 low-molecular weight proteins. The cofactor is heme b.

The protein localises to the mitochondrion inner membrane. Its function is as follows. Component of the ubiquinol-cytochrome c reductase complex (complex III or cytochrome b-c1 complex) that is part of the mitochondrial respiratory chain. The b-c1 complex mediates electron transfer from ubiquinol to cytochrome c. Contributes to the generation of a proton gradient across the mitochondrial membrane that is then used for ATP synthesis. The chain is Cytochrome b (MT-CYB) from Eryx miliaris nogaiorum (Black sand boa).